We begin with the raw amino-acid sequence, 198 residues long: MSLSIPDAFSFFKLSCGSWVSQRSSHHLLHRRAEPGASLIVVKELSATDDRLLSVAKLHQKNPNMLVGGCWVRWSGSMAWDQEGESHEGESIFGLIPTDENGREGLLLRDRGYAETAPVAGKFQMDEHDALLLSTSYDTMISNERFWFTGPDIRLRTSVVEGLSNTASFCIETRREYKAILNDNLNTNNDLMHSKFGW.

Belongs to the CpcS/CpeS biliprotein lyase family.

The protein localises to the plastid. Its subcellular location is the organellar chromatophore. Its function is as follows. Covalently attaches a chromophore to Cys residue(s) of phycobiliproteins. This is Chromophore lyase CpcS/CpeS 2 from Paulinella chromatophora.